The sequence spans 363 residues: S-adenosylmethionine:tRNA ribosyltransferase-isomerase (363 aa).

Belongs to the QueA family. Monomer.

The protein resides in the cytoplasm. It carries out the reaction 7-aminomethyl-7-carbaguanosine(34) in tRNA + S-adenosyl-L-methionine = epoxyqueuosine(34) in tRNA + adenine + L-methionine + 2 H(+). The protein operates within tRNA modification; tRNA-queuosine biosynthesis. Transfers and isomerizes the ribose moiety from AdoMet to the 7-aminomethyl group of 7-deazaguanine (preQ1-tRNA) to give epoxyqueuosine (oQ-tRNA). The sequence is that of S-adenosylmethionine:tRNA ribosyltransferase-isomerase from Brucella anthropi (strain ATCC 49188 / DSM 6882 / CCUG 24695 / JCM 21032 / LMG 3331 / NBRC 15819 / NCTC 12168 / Alc 37) (Ochrobactrum anthropi).